A 315-amino-acid polypeptide reads, in one-letter code: Protein-methionine-sulfoxide reductase catalytic subunit MsrP (315 aa).

Positions 1 to 45 (MPSYRPPKIASSEITPRQVYLRRREFLGAATLGAMALYGAGKASA) form a signal peptide, tat-type signal. Mo-molybdopterin contacts are provided by residues Asn-71, 74–75 (YE), Cys-129, Thr-164, Asn-214, Arg-219, and 230–232 (GIK).

This sequence belongs to the MsrP family. As to quaternary structure, heterodimer of a catalytic subunit (MsrP) and a heme-binding subunit (MsrQ). Requires Mo-molybdopterin as cofactor. Predicted to be exported by the Tat system. The position of the signal peptide cleavage has not been experimentally proven.

It localises to the periplasm. It catalyses the reaction L-methionyl-[protein] + a quinone + H2O = L-methionyl-(S)-S-oxide-[protein] + a quinol. The catalysed reaction is L-methionyl-[protein] + a quinone + H2O = L-methionyl-(R)-S-oxide-[protein] + a quinol. Part of the MsrPQ system that repairs oxidized periplasmic proteins containing methionine sulfoxide residues (Met-O), using respiratory chain electrons. Thus protects these proteins from oxidative-stress damage caused by reactive species of oxygen and chlorine generated by the host defense mechanisms. MsrPQ is essential for the maintenance of envelope integrity under bleach stress, rescuing a wide series of structurally unrelated periplasmic proteins from methionine oxidation. The catalytic subunit MsrP is non-stereospecific, being able to reduce both (R-) and (S-) diastereoisomers of methionine sulfoxide. This Rhizobium etli (strain ATCC 51251 / DSM 11541 / JCM 21823 / NBRC 15573 / CFN 42) protein is Protein-methionine-sulfoxide reductase catalytic subunit MsrP.